A 457-amino-acid chain; its full sequence is D(1B) dopamine receptor (457 aa).

At 1–41 (MYQPFQHLDSDQVASWQSPEMLMNKSVSRESQRRKELVAGQ) the chain is on the extracellular side. An N-linked (GlcNAc...) asparagine glycan is attached at N24. A helical transmembrane segment spans residues 42–67 (IVTGSLLLLLIFWTLFGNILVCTAVM). The Cytoplasmic segment spans residues 68-78 (RFRHLRSRVTN). The chain crosses the membrane as a helical span at residues 79 to 105 (IFIVSLAVSDLLVALLVMPWKAVAEVA). Topologically, residues 106-114 (GHWPFGAFC) are extracellular. C114 and C199 are oxidised to a cystine. The chain crosses the membrane as a helical span at residues 115-137 (DIWVAFDIMCSTASILNLCVISV). Residues 138-156 (DRYWAISSPFRYERKMTQR) are Cytoplasmic-facing. A helical transmembrane segment spans residues 157–181 (VALLMISTAWALSVLISFIPVQLSW). Over 182 to 205 (HKSETEDHLLSNHSTGNCDSSLNR) the chain is Extracellular. A helical transmembrane segment spans residues 206–231 (TYAISSSLISFYIPVAIMIVTYTRIY). Residues 232–282 (RIAQIQIKRISTLERAAEHAQSCRSNRVDSCSRHHQTSLRTSIKKETKVLK) are Cytoplasmic-facing. A helical transmembrane segment spans residues 283–309 (TLSIIMGVFVCCWLPFFILNCMVPFCD). The Extracellular segment spans residues 310–326 (RSPGHPQAGLPCVSETT). The chain crosses the membrane as a helical span at residues 327-351 (FDIFVWFGWANSSLNPIIYAFNADF). Topologically, residues 352 to 457 (RKVFSSLLGC…ITPSMSNGIH (106 aa)) are cytoplasmic. C361 carries S-palmitoyl cysteine lipidation.

Belongs to the G-protein coupled receptor 1 family. In terms of tissue distribution, brain and kidney.

The protein localises to the cell membrane. Dopamine receptor whose activity is mediated by G proteins which activate adenylyl cyclase. The chain is D(1B) dopamine receptor (drd5) from Xenopus laevis (African clawed frog).